Reading from the N-terminus, the 394-residue chain is Phosphopentomutase (394 aa).

Mn(2+)-binding residues include Asp13, Asp286, His291, Asp327, His328, and His339.

Belongs to the phosphopentomutase family. Mn(2+) serves as cofactor.

The protein localises to the cytoplasm. The enzyme catalyses 2-deoxy-alpha-D-ribose 1-phosphate = 2-deoxy-D-ribose 5-phosphate. The catalysed reaction is alpha-D-ribose 1-phosphate = D-ribose 5-phosphate. It functions in the pathway carbohydrate degradation; 2-deoxy-D-ribose 1-phosphate degradation; D-glyceraldehyde 3-phosphate and acetaldehyde from 2-deoxy-alpha-D-ribose 1-phosphate: step 1/2. Its function is as follows. Isomerase that catalyzes the conversion of deoxy-ribose 1-phosphate (dRib-1-P) and ribose 1-phosphate (Rib-1-P) to deoxy-ribose 5-phosphate (dRib-5-P) and ribose 5-phosphate (Rib-5-P), respectively. In Bacillus cereus (strain ATCC 10987 / NRS 248), this protein is Phosphopentomutase.